The chain runs to 240 residues: Protein GUCD1 (240 aa).

The sequence is that of Protein GUCD1 (GUCD1) from Homo sapiens (Human).